The following is an 879-amino-acid chain: MNEQYSAMRSNVSMLGTLLGDTIKEALGEHILEKVETIRKLSKSSRAGNEASRQELLTTLQNLSNDELLPVARAFSQFLNLTNTAEQYHSISPHGEAASNPEALAQLFTRLKDKKLSEQDMRSAVDELSIELVLTAHPTEITRRTLIHKLVEVNTCLSQLDHNDLADYERNKIMRRLRQLVAQSWHTDEIRKIRPSPVDEAKWGFAVVENSLWEGVPAFLREFNEQLQNSLDYRLPVEAVPIRFTSWMGGDRDGNPNVTAEITRHVLLLSRWKATDLFLRDIQVLVSELSMSECTPELRELAGGEEVLEPYRELMKRVRTQLTNTQAYLEARLKGERVLPPTDLLVSNDQLWDPLYACYQSLKACGMEIIANGQLLDTLRRVRCFGVPLVRIDVRQESTRHTDAIAELTRYLGLGDYESWSEADKQAFLIRELNSKRPLVPLKWEPSADTQEVLETCRVIAEAPQGSIAAYVISMAKVPSDVLAVHLLLKEAGCPFTLPVAPLFETLDDLNNADDVMTQLLNIDWYRGLIQGKQMVMIGYSDSAKDAGVMAASWAQYRAQDALIKTCEKAGISLTLFHGRGGSIGRGGAPAHAALLSQPPGSLKGGLRVTEQGEMIRFKFGLPEVTISSLALYASAVLEANLLPPPEPKKEWNEVMDILSDASCEMYRGYVRENPQFVPYFRAATPELELGKLPLGSRPAKRRPNGGVESLRAIPWIFAWTQNRLMLPAWLGAGAGLQKAIDAGKKEVLATMCRDWPFFSTRIGMLEMVFAKADLWLAEYYDQRLVDKSLWPLGQQLRDQLEADIKVVLAIANDDHLMADLPWIAESIALRNVYTDPLNVLQAELLHRSRQQENAADACVEQALMVTIAGVAAGMRNTG.

Active-site residues include His137 and Lys545.

Belongs to the PEPCase type 1 family. Requires Mg(2+) as cofactor.

The enzyme catalyses oxaloacetate + phosphate = phosphoenolpyruvate + hydrogencarbonate. Its function is as follows. Forms oxaloacetate, a four-carbon dicarboxylic acid source for the tricarboxylic acid cycle. The chain is Phosphoenolpyruvate carboxylase from Yersinia enterocolitica serotype O:8 / biotype 1B (strain NCTC 13174 / 8081).